Reading from the N-terminus, the 256-residue chain is Follistatin-related protein 3 (256 aa).

Positions Met1–Ala23 are cleaved as a signal peptide. One can recognise a TB domain in the interval Gly34–Gly105. 8 cysteine pairs are disulfide-bonded: Cys36–Cys59, Cys46–Cys90, Cys60–Cys93, Cys97–Cys108, Cys102–Cys117, Cys119–Cys151, Cys123–Cys144, and Cys133–Cys165. Asn71 carries an N-linked (GlcNAc...) asparagine glycan. In terms of domain architecture, Follistatin-like 1 spans Cys97 to Cys117. 2 consecutive Kazal-like domains span residues Leu111–Lys167 and Ser187–Gly243. Positions Ser168–Val191 constitute a Follistatin-like 2 domain. 3 disulfide bridges follow: Cys193–Cys227, Cys198–Cys220, and Cys209–Cys241. An N-linked (GlcNAc...) asparagine glycan is attached at Asn213.

Interacts with INHBA and INHBB. Interacts with FN1. Interacts with ADAM12. Interacts with MLLT10; the interaction enhances MLLT10 in vitro transcriptional activity and self-association. Interacts with MSTN. Abundantly expressed in heart, lung, kidney and testis. Continuously expressed in embryonic heart.

The protein localises to the secreted. It is found in the nucleus. The secreted form is a binding and antagonizing protein for members of the TGF-beta family, such as activin, BMP2 and MSTN. Inhibits activin A-, activin B-, BMP2- and MSDT-induced cellular signaling; more effective on activin A than on activin B. Involved in bone formation; inhibits osteoclast differentiation. Involved in hematopoiesis; involved in differentiation of hemopoietic progenitor cells, increases hematopoietic cell adhesion to fibronectin and seems to contribute to the adhesion of hematopoietic precursor cells to the bone marrow stroma. The nuclear form is probably involved in transcriptional regulation via interaction with MLLT10. The polypeptide is Follistatin-related protein 3 (Fstl3) (Mus musculus (Mouse)).